The following is a 310-amino-acid chain: GPN-loop GTPase 2 (310 aa).

Ala-2 bears the N-acetylalanine mark. Residue 19-24 (GSGKTT) coordinates GTP. The short motif at 76–78 (GPN) is the Gly-Pro-Asn (GPN)-loop; involved in dimer interface element. 178–181 (SKMD) is a binding site for GTP.

Belongs to the GPN-loop GTPase family. Heterodimers with GPN1 or GPN3. Binds to RNA polymerase II (RNAPII).

In terms of biological role, small GTPase required for proper localization of RNA polymerase II and III (RNAPII and RNAPIII). May act at an RNAP assembly step prior to nuclear import. The chain is GPN-loop GTPase 2 from Sus scrofa (Pig).